Reading from the N-terminus, the 93-residue chain is Integration host factor subunit beta (93 aa).

This sequence belongs to the bacterial histone-like protein family. As to quaternary structure, heterodimer of an alpha and a beta chain.

In terms of biological role, this protein is one of the two subunits of integration host factor, a specific DNA-binding protein that functions in genetic recombination as well as in transcriptional and translational control. In Tolumonas auensis (strain DSM 9187 / NBRC 110442 / TA 4), this protein is Integration host factor subunit beta.